The primary structure comprises 264 residues: uncharacterized protein (264 aa).

A run of 6 helical transmembrane segments spans residues 1–21 (MLLG…SVSL), 43–63 (FFGV…NGFV), 95–115 (VVGL…LSSL), 146–166 (IATW…LGGL), 181–201 (GWLA…QPFV), and 215–235 (IVAN…MFFP).

To M.pneumoniae MPN_308 C-terminal region.

The protein resides in the cell membrane. This is an uncharacterized protein from Mycoplasma pneumoniae (strain ATCC 29342 / M129 / Subtype 1) (Mycoplasmoides pneumoniae).